Consider the following 423-residue polypeptide: NDP-N-acetyl-D-galactosaminuronic acid dehydrogenase (423 aa).

11–28 (TISVVGLGYIGLPTATVL) provides a ligand contact to NAD(+). Lys-218 functions as the Proton donor/acceptor in the catalytic mechanism. Cys-272 (nucleophile) is an active-site residue.

It belongs to the UDP-glucose/GDP-mannose dehydrogenase family.

Functionally, probably involved in the synthesis of sugar components of EPS I, by converting NDP-N-acetyl-D-galactosamine into NDP-N-acetyl-D-galactosaminuronic acid. In Ralstonia nicotianae (strain ATCC BAA-1114 / GMI1000) (Ralstonia solanacearum), this protein is NDP-N-acetyl-D-galactosaminuronic acid dehydrogenase (epsD).